Reading from the N-terminus, the 155-residue chain is Leader peptidase HopD (155 aa).

Belongs to the peptidase A24 family.

The chain is Leader peptidase HopD (hopD) from Escherichia coli.